The chain runs to 168 residues: Peptide methionine sulfoxide reductase MsrA 2 (168 aa).

C11 is an active-site residue.

The protein belongs to the MsrA Met sulfoxide reductase family.

It carries out the reaction L-methionyl-[protein] + [thioredoxin]-disulfide + H2O = L-methionyl-(S)-S-oxide-[protein] + [thioredoxin]-dithiol. It catalyses the reaction [thioredoxin]-disulfide + L-methionine + H2O = L-methionine (S)-S-oxide + [thioredoxin]-dithiol. Its function is as follows. Has an important function as a repair enzyme for proteins that have been inactivated by oxidation. Catalyzes the reversible oxidation-reduction of methionine sulfoxide in proteins to methionine. The protein is Peptide methionine sulfoxide reductase MsrA 2 of Rhodopirellula baltica (strain DSM 10527 / NCIMB 13988 / SH1).